Here is a 108-residue protein sequence, read N- to C-terminus: Nucleoid-associated protein BARBAKC583_1239 (108 aa).

It belongs to the YbaB/EbfC family. As to quaternary structure, homodimer.

It localises to the cytoplasm. The protein resides in the nucleoid. Binds to DNA and alters its conformation. May be involved in regulation of gene expression, nucleoid organization and DNA protection. The sequence is that of Nucleoid-associated protein BARBAKC583_1239 from Bartonella bacilliformis (strain ATCC 35685 / KC583 / Herrer 020/F12,63).